Consider the following 262-residue polypeptide: Glycine and serine-rich protein 1 (262 aa).

The signal sequence occupies residues 1–21 (MVIKTSLTVLILGVLIAEVFC). The N-linked (GlcNAc...) asparagine glycan is linked to N59. The segment at 172 to 212 (SNGGWGAETGSSGGMNSQSSGSQSGSWGSSSGSWGGSSGSM) is disordered. The span at 174 to 184 (GGWGAETGSSG) shows a compositional bias: gly residues. The span at 185–203 (GMNSQSSGSQSGSWGSSSG) shows a compositional bias: low complexity.

Component of the acid-insoluble and acid-soluble organic matrix of calcified layers of the shell (at protein level).

It localises to the secreted. This is Glycine and serine-rich protein 1 from Lottia gigantea (Giant owl limpet).